The chain runs to 981 residues: uncharacterized protein (981 aa).

Positions 535–612 (VLLNPVAIEI…SIASIIQKKS (78 aa)) constitute a Carrier domain. Ser-571 carries the post-translational modification O-(pantetheine 4'-phosphoryl)serine.

It belongs to the ATP-dependent AMP-binding enzyme family.

This is an uncharacterized protein from Schizosaccharomyces pombe (strain 972 / ATCC 24843) (Fission yeast).